The sequence spans 276 residues: Bifunctional protein FolD 1 (276 aa).

Residues 161–163, Ser186, and Thr227 each bind NADP(+); that span reads GRG.

The protein belongs to the tetrahydrofolate dehydrogenase/cyclohydrolase family. As to quaternary structure, homodimer.

The catalysed reaction is (6R)-5,10-methylene-5,6,7,8-tetrahydrofolate + NADP(+) = (6R)-5,10-methenyltetrahydrofolate + NADPH. The enzyme catalyses (6R)-5,10-methenyltetrahydrofolate + H2O = (6R)-10-formyltetrahydrofolate + H(+). It functions in the pathway one-carbon metabolism; tetrahydrofolate interconversion. In terms of biological role, catalyzes the oxidation of 5,10-methylenetetrahydrofolate to 5,10-methenyltetrahydrofolate and then the hydrolysis of 5,10-methenyltetrahydrofolate to 10-formyltetrahydrofolate. The polypeptide is Bifunctional protein FolD 1 (Frankia casuarinae (strain DSM 45818 / CECT 9043 / HFP020203 / CcI3)).